Here is a 314-residue protein sequence, read N- to C-terminus: MSRVPAFLSAAEVEEHLRSSSLLIPPLETALANFSSGPEGGVMQPVRTVVPVTKHRGYLGVMPAYSAAEDALTTKLVTFYEDRGITSVVPSHQATVLLFEPSNGTLLAVMDGNVITAKRTAAVSAIATKFLKPPSSEVLCILGAGVQAYSHYEIFTEQFSFKEVRIWNRTKENAEKFADTVQGEVRVCSSVQEAVAGADVIITVTLATEPILFGEWVKPGAHINAVGASRPDWRELDDELMKEAVLYVDSQEAALKESGDVLLSGAEIFAELGEVIKGVKPAHCEKTTVFKSLGMAVEDTVAAKLIYDSWSSGK.

A 3,3',5-triiodo-L-thyronine-binding site is contributed by R47. Positions 82, 92, 119, 144, 146, 147, 168, 169, 170, 173, 205, 206, 226, and 228 each coordinate NADPH. E257 provides a ligand contact to 3,3',5-triiodo-L-thyronine. Position 292 (S292) interacts with NADPH.

It belongs to the ornithine cyclodeaminase/mu-crystallin family. Homodimer. Binds the thyroid hormone triiodothyronine (T3); T3 binding inhibits enzymatic activity. Expressed in neural tissues, muscle and kidney. Expressed in the inner ear.

The protein localises to the cytoplasm. It carries out the reaction L-pipecolate + NADP(+) = Delta(1)-piperideine-2-carboxylate + NADPH + H(+). The catalysed reaction is L-pipecolate + NAD(+) = Delta(1)-piperideine-2-carboxylate + NADH + H(+). The enzyme catalyses L-proline + NADP(+) = 1-pyrroline-2-carboxylate + NADPH + H(+). It catalyses the reaction L-proline + NAD(+) = 1-pyrroline-2-carboxylate + NADH + H(+). It carries out the reaction (3R)-1,4-thiomorpholine-3-carboxylate + NAD(+) = 3,4-dehydrothiomorpholine-3-carboxylate + NADH + 2 H(+). The catalysed reaction is (3R)-1,4-thiomorpholine-3-carboxylate + NADP(+) = 3,4-dehydrothiomorpholine-3-carboxylate + NADPH + 2 H(+). The enzyme catalyses (S)-cystathionine ketimine + NADH + 2 H(+) = (3R,5S)-2,3,5,6,7-pentahydro-1,4-thiazepine-3,5-dicarboxylate + NAD(+). It catalyses the reaction (S)-cystathionine ketimine + NADPH + 2 H(+) = (3R,5S)-2,3,5,6,7-pentahydro-1,4-thiazepine-3,5-dicarboxylate + NADP(+). It carries out the reaction (R)-lanthionine ketimine + NADPH + 2 H(+) = (3R,5R)-1,4-thiomorpholine-3,5-dicarboxylate + NADP(+). The catalysed reaction is Delta(2)-thiazoline-2-carboxylate + NADPH + 2 H(+) = L-thiazolidine-2-carboxylate + NADP(+). Its activity is regulated as follows. Inhibited by thyroid hormones triiodothyronine (T3) and thyroxine (T4). Catalyzes the NAD(P)H-dependent reduction of imine double bonds of a number of cyclic ketimine substrates, including sulfur-containing cyclic ketimines. Under physiological conditions, it efficiently catalyzes delta(1)-piperideine-2-carboxylate (P2C) and delta(1)-pyrroline-2-carboxylate (Pyr2C) reduction, suggesting a central role in lysine and glutamate metabolism. Additional substrates are delta(2)-thiazoline-2-carboxylate (T2C), 3,4-dehydrothiomorpholine-3-carboxylate (AECK), and (R)-lanthionine ketimine (LK) that is reduced at very low rate compared to other substrates. Also catalyzes the NAD(P)H-dependent reduction of (S)-cystathionine ketimine (CysK). The sequence is that of Ketimine reductase mu-crystallin from Homo sapiens (Human).